The chain runs to 406 residues: Eukaryotic initiation factor 4A-I (406 aa).

The disordered stretch occupies residues 1–21 (MSASQDSRSRDNGPDGMEPEG). The residue at position 2 (Ser-2) is an N-acetylserine. Ser-4 carries the phosphoserine modification. Positions 32–60 (DSFDDMNLSESLLRGIYAYGFEKPSAIQQ) match the Q motif motif. Positions 63-234 (ILPCIKGYDV…KKFMRDPIRI (172 aa)) constitute a Helicase ATP-binding domain. Residue 76–83 (AQSGTGKT) participates in ATP binding. At Lys-118 the chain carries N6-acetyllysine. Lys-146 is covalently cross-linked (Glycyl lysine isopeptide (Lys-Gly) (interchain with G-Cter in SUMO2)). The residue at position 158 (Thr-158) is a Phosphothreonine. Lys-174 carries the N6-acetyllysine modification. A DEAD box motif is present at residues 182–185 (DEAD). The residue at position 193 (Lys-193) is an N6-acetyllysine. A Glycyl lysine isopeptide (Lys-Gly) (interchain with G-Cter in SUMO2) cross-link involves residue Lys-225. The residue at position 238 (Lys-238) is an N6-acetyllysine; alternate. Lys-238 participates in a covalent cross-link: Glycyl lysine isopeptide (Lys-Gly) (interchain with G-Cter in SUMO2); alternate. Positions 245 to 406 (GIRQFYINVE…EMPLNVADLI (162 aa)) constitute a Helicase C-terminal domain. Residues Lys-309, Lys-369, and Lys-381 each participate in a glycyl lysine isopeptide (Lys-Gly) (interchain with G-Cter in SUMO2) cross-link.

Belongs to the DEAD box helicase family. eIF4A subfamily. As to quaternary structure, eIF4F is a multi-subunit complex, the composition of which varies with external and internal environmental conditions. It is composed of at least EIF4A, EIF4E and EIF4G1/EIF4G3. Interacts with PAIP1, EIF4E and UPF2. Found in a complex with XPO7, EIF4A1, ARHGAP1, VPS26A, VPS29, VPS35 and SFN. May interact with NOM1. Interacts with PDCD4; this interferes with the interaction between EIF4A and EIF4G. Interacts with RBM4. Interacts with DDX3X in an RNA-independent manner. Interacts with PKP1 (via N-terminus); the interaction promotes EIF4A1 recruitment to the cap-dependent translation complex and EIF4A1 ATPase activity.

It is found in the cytoplasm. The protein localises to the perinuclear region. The protein resides in the cell membrane. Its subcellular location is the stress granule. It carries out the reaction ATP + H2O = ADP + phosphate + H(+). In terms of biological role, ATP-dependent RNA helicase which is a subunit of the eIF4F complex involved in cap recognition and is required for mRNA binding to ribosome. In the current model of translation initiation, eIF4A unwinds RNA secondary structures in the 5'-UTR of mRNAs which is necessary to allow efficient binding of the small ribosomal subunit, and subsequent scanning for the initiator codon. As a result, promotes cell proliferation and growth. In Bos taurus (Bovine), this protein is Eukaryotic initiation factor 4A-I (EIF4A1).